Consider the following 123-residue polypeptide: RxLR effector protein Avh262 (123 aa).

A signal peptide spans methionine 1–alanine 18. Residues valine 24 to asparagine 46 are disordered. Positions arginine 30–arginine 50 match the RxLR-dEER motif. Residues lysine 34 to asparagine 46 show a composition bias toward basic and acidic residues. The tract at residues leucine 60–threonine 82 is biP-binding.

This sequence belongs to the RxLR effector family. In terms of assembly, interacts with host plant ER-luminal binding immunoglobulin proteins (BiPs) such as soybean BiP1, BiP2, BiP3 and BiP4.

It localises to the secreted. It is found in the host endoplasmic reticulum. Effector that suppresses plant defense responses during the early stages of pathogen infection. Suppresses cell death induced by effectors and PAMPs in plant hosts. Avh262 stabilizes endoplasmic reticulum (ER)-luminal binding immunoglobulin proteins (BiPs), which act as negative regulators of plant resistance to Phytophthora. By stabilizing BiPs, Avh262 suppresses ER stress-triggered cell death and facilitates Phytophthora infection. This is RxLR effector protein Avh262 from Phytophthora sojae (Soybean stem and root rot agent).